A 352-amino-acid polypeptide reads, in one-letter code: Probable dual-specificity RNA methyltransferase RlmN (352 aa).

The active-site Proton acceptor is the glutamate 99. The Radical SAM core domain occupies 105–325; the sequence is EGDRATLCIS…ESHGYTCTIR (221 aa). An intrachain disulfide couples cysteine 112 to cysteine 336. [4Fe-4S] cluster is bound by residues cysteine 119, cysteine 123, and cysteine 126. Residues 164 to 165, serine 196, 217 to 219, and histidine 293 each bind S-adenosyl-L-methionine; these read GE and SLH. The active-site S-methylcysteine intermediate is the cysteine 336.

This sequence belongs to the radical SAM superfamily. RlmN family. Requires [4Fe-4S] cluster as cofactor.

The protein localises to the cytoplasm. The catalysed reaction is adenosine(2503) in 23S rRNA + 2 reduced [2Fe-2S]-[ferredoxin] + 2 S-adenosyl-L-methionine = 2-methyladenosine(2503) in 23S rRNA + 5'-deoxyadenosine + L-methionine + 2 oxidized [2Fe-2S]-[ferredoxin] + S-adenosyl-L-homocysteine. The enzyme catalyses adenosine(37) in tRNA + 2 reduced [2Fe-2S]-[ferredoxin] + 2 S-adenosyl-L-methionine = 2-methyladenosine(37) in tRNA + 5'-deoxyadenosine + L-methionine + 2 oxidized [2Fe-2S]-[ferredoxin] + S-adenosyl-L-homocysteine. In terms of biological role, specifically methylates position 2 of adenine 2503 in 23S rRNA and position 2 of adenine 37 in tRNAs. In Porphyromonas gingivalis (strain ATCC 33277 / DSM 20709 / CIP 103683 / JCM 12257 / NCTC 11834 / 2561), this protein is Probable dual-specificity RNA methyltransferase RlmN.